The primary structure comprises 407 residues: Peptidase T (407 aa).

Histidine 82 lines the Zn(2+) pocket. Residue aspartate 84 is part of the active site. Aspartate 143 lines the Zn(2+) pocket. Glutamate 177 functions as the Proton acceptor in the catalytic mechanism. Zn(2+) contacts are provided by glutamate 178, aspartate 200, and histidine 382.

Belongs to the peptidase M20B family. Zn(2+) serves as cofactor.

The protein resides in the cytoplasm. It catalyses the reaction Release of the N-terminal residue from a tripeptide.. Functionally, cleaves the N-terminal amino acid of tripeptides. The polypeptide is Peptidase T (Streptococcus pyogenes serotype M4 (strain MGAS10750)).